A 715-amino-acid chain; its full sequence is uncharacterized protein (715 aa).

Residues 688 to 708 (VWKFNPALYSTITNIFLLIIF) form a helical membrane-spanning segment.

This sequence belongs to the plectrovirus ORF1 family.

The protein localises to the host membrane. This is an uncharacterized protein from Spiroplasma virus SpV1-R8A2 B (SpV1).